Consider the following 334-residue polypeptide: uncharacterized protein (334 aa).

This sequence belongs to the PAPS reductase family.

This is an uncharacterized protein from Escherichia phage 186 (Bacteriophage 186).